Here is a 257-residue protein sequence, read N- to C-terminus: tRNA (guanine-N(7)-)-methyltransferase (257 aa).

The segment covering 1–12 has biased composition (acidic residues); the sequence is MARDSEDQDMET. Positions 1 to 25 are disordered; it reads MARDSEDQDMETETNGAAEGLDPTS. Residues Gly-80, 103-104, 138-139, and Leu-158 each bind S-adenosyl-L-methionine; these read EI and NA. Asp-161 is a catalytic residue. 236-238 provides a ligand contact to S-adenosyl-L-methionine; it reads SEE.

The protein belongs to the class I-like SAM-binding methyltransferase superfamily. TrmB family.

The protein resides in the nucleus. The catalysed reaction is guanosine(46) in tRNA + S-adenosyl-L-methionine = N(7)-methylguanosine(46) in tRNA + S-adenosyl-L-homocysteine. It functions in the pathway tRNA modification; N(7)-methylguanine-tRNA biosynthesis. In terms of biological role, catalyzes the formation of N(7)-methylguanine at position 46 (m7G46) in tRNA. In Drosophila ananassae (Fruit fly), this protein is tRNA (guanine-N(7)-)-methyltransferase.